Consider the following 446-residue polypeptide: Palmitoyltransferase PFA4 (446 aa).

Topologically, residues 1–8 are cytoplasmic; it reads MAVQLKWP. A helical membrane pass occupies residues 9–29; it reads ILGVIIPCIIIFSLSYGSHYF. Residues 30-40 lie on the Lumenal side of the membrane; it reads ILRHHLTMKQQ. Residues 41 to 61 traverse the membrane as a helical segment; that stretch reads LIYEFYVTMIWISYLLAIYTN. At 62 to 161 the chain is on the cytoplasmic side; sequence PGRVPKNYKP…GNNNLPHFMR (100 aa). The region spanning 114-164 is the DHHC domain; that stretch reads RYCKKCNNYKPPRSHHCKICQQCVLQMDHHCPWTLNCVGNNNLPHFMRFLG. The active-site S-palmitoyl cysteine intermediate is Cys144. The chain crosses the membrane as a helical span at residues 162-182; sequence FLGWIIWGTGYLMIQLIKLII. Residues 183 to 201 are Lumenal-facing; the sequence is NYYENSNMPHYLFNKTELV. Residues 202–222 form a helical membrane-spanning segment; the sequence is AIIAITPLNFFVFASILVLFI. At 223 to 446 the chain is on the cytoplasmic side; the sequence is RCLINICKGM…TDFGVDEDSD (224 aa).

This sequence belongs to the DHHC palmitoyltransferase family. PFA4 subfamily.

It localises to the endoplasmic reticulum membrane. It catalyses the reaction L-cysteinyl-[protein] + hexadecanoyl-CoA = S-hexadecanoyl-L-cysteinyl-[protein] + CoA. Functionally, mediates the reversible addition of palmitate to target proteins, thereby regulating their membrane association and biological function. This Candida albicans (strain SC5314 / ATCC MYA-2876) (Yeast) protein is Palmitoyltransferase PFA4.